Reading from the N-terminus, the 432-residue chain is Adenylosuccinate synthetase (432 aa).

Residues 13 to 19 (GDEGKGK) and 41 to 43 (GHT) each bind GTP. Asp14 (proton acceptor) is an active-site residue. 2 residues coordinate Mg(2+): Asp14 and Gly41. Residues 14-17 (DEGK), 39-42 (NAGH), Thr130, Arg144, Gln225, Thr240, and Arg304 contribute to the IMP site. His42 serves as the catalytic Proton donor. 300–306 (ATTGRKR) contacts substrate. Residues Arg306, 332–334 (KLD), and 414–416 (STG) each bind GTP.

This sequence belongs to the adenylosuccinate synthetase family. As to quaternary structure, homodimer. Mg(2+) serves as cofactor.

It is found in the cytoplasm. It carries out the reaction IMP + L-aspartate + GTP = N(6)-(1,2-dicarboxyethyl)-AMP + GDP + phosphate + 2 H(+). It functions in the pathway purine metabolism; AMP biosynthesis via de novo pathway; AMP from IMP: step 1/2. Plays an important role in the de novo pathway of purine nucleotide biosynthesis. Catalyzes the first committed step in the biosynthesis of AMP from IMP. The protein is Adenylosuccinate synthetase of Alkalilimnicola ehrlichii (strain ATCC BAA-1101 / DSM 17681 / MLHE-1).